The sequence spans 163 residues: MSNINLATLDISEHPNLPSSSAVLFEAKAKKKLSFEAIASAIGRNEVATAAIFYGQAKASAEDIVKLSEVLGIDHLYLESLLSGFPDRGKSMTFPPKDPLIYRLFEIVQNYGYAYKAVMNEKFGDGIMSAISFSTKVEKETDLDGNNWAVVTWRGKWLPYSRF.

Residues Arg103, Glu106, and Ser129 contribute to the active site.

This sequence belongs to the cyanase family.

The catalysed reaction is cyanate + hydrogencarbonate + 3 H(+) = NH4(+) + 2 CO2. In terms of biological role, catalyzes the reaction of cyanate with bicarbonate to produce ammonia and carbon dioxide. The sequence is that of Cyanate hydratase from Paracoccidioides brasiliensis (strain Pb18).